The sequence spans 132 residues: U-scoloptoxin(11)-Sa1a (132 aa).

The N-terminal stretch at 1–19 is a signal peptide; that stretch reads MIRFFAFVLFFATQELILC.

Belongs to the scoloptoxin-11 family. Contains 5 disulfide bonds. In terms of tissue distribution, expressed by the venom gland.

The protein localises to the secreted. This Scolopendra alternans (Florida Keys giant centipede) protein is U-scoloptoxin(11)-Sa1a.